Consider the following 218-residue polypeptide: Deoxyribose-phosphate aldolase (218 aa).

The Proton donor/acceptor role is filled by aspartate 89. Catalysis depends on lysine 152, which acts as the Schiff-base intermediate with acetaldehyde. Residue lysine 182 is the Proton donor/acceptor of the active site.

Belongs to the DeoC/FbaB aldolase family. DeoC type 1 subfamily.

The protein resides in the cytoplasm. It catalyses the reaction 2-deoxy-D-ribose 5-phosphate = D-glyceraldehyde 3-phosphate + acetaldehyde. It participates in carbohydrate degradation; 2-deoxy-D-ribose 1-phosphate degradation; D-glyceraldehyde 3-phosphate and acetaldehyde from 2-deoxy-alpha-D-ribose 1-phosphate: step 2/2. Functionally, catalyzes a reversible aldol reaction between acetaldehyde and D-glyceraldehyde 3-phosphate to generate 2-deoxy-D-ribose 5-phosphate. In Corynebacterium diphtheriae (strain ATCC 700971 / NCTC 13129 / Biotype gravis), this protein is Deoxyribose-phosphate aldolase.